We begin with the raw amino-acid sequence, 116 residues long: Phosphoribosyl-ATP pyrophosphatase (116 aa).

Belongs to the PRA-PH family.

The protein resides in the cytoplasm. The catalysed reaction is 1-(5-phospho-beta-D-ribosyl)-ATP + H2O = 1-(5-phospho-beta-D-ribosyl)-5'-AMP + diphosphate + H(+). The protein operates within amino-acid biosynthesis; L-histidine biosynthesis; L-histidine from 5-phospho-alpha-D-ribose 1-diphosphate: step 2/9. This chain is Phosphoribosyl-ATP pyrophosphatase, found in Nitrobacter winogradskyi (strain ATCC 25391 / DSM 10237 / CIP 104748 / NCIMB 11846 / Nb-255).